Reading from the N-terminus, the 97-residue chain is Integration host factor subunit beta (97 aa).

The protein belongs to the bacterial histone-like protein family. In terms of assembly, heterodimer of an alpha and a beta chain.

Its function is as follows. This protein is one of the two subunits of integration host factor, a specific DNA-binding protein that functions in genetic recombination as well as in transcriptional and translational control. This Buchnera aphidicola subsp. Cinara cedri (strain Cc) protein is Integration host factor subunit beta.